The chain runs to 252 residues: Triosephosphate isomerase (252 aa).

Residue 10-12 (NWK) participates in substrate binding. His-96 serves as the catalytic Electrophile. The active-site Proton acceptor is the Glu-168. Substrate contacts are provided by residues Gly-174, Ser-214, and 235-236 (GG).

The protein belongs to the triosephosphate isomerase family. As to quaternary structure, homodimer.

Its subcellular location is the cytoplasm. The enzyme catalyses D-glyceraldehyde 3-phosphate = dihydroxyacetone phosphate. It participates in carbohydrate biosynthesis; gluconeogenesis. Its pathway is carbohydrate degradation; glycolysis; D-glyceraldehyde 3-phosphate from glycerone phosphate: step 1/1. Its function is as follows. Involved in the gluconeogenesis. Catalyzes stereospecifically the conversion of dihydroxyacetone phosphate (DHAP) to D-glyceraldehyde-3-phosphate (G3P). The chain is Triosephosphate isomerase from Streptococcus pyogenes serotype M6 (strain ATCC BAA-946 / MGAS10394).